A 291-amino-acid polypeptide reads, in one-letter code: Gamma-sarcoglycan (291 aa).

Residues Met1 to Tyr37 lie on the Cytoplasmic side of the membrane. A helical; Signal-anchor for type II membrane protein membrane pass occupies residues Leu38–Leu58. Residues Lys59–Leu291 are Extracellular-facing. Asn110 carries an N-linked (GlcNAc...) asparagine glycan. Disulfide bonds link Cys265–Cys290 and Cys267–Cys283.

Belongs to the sarcoglycan beta/delta/gamma/zeta family. In terms of assembly, interacts with the syntrophin SNTA1 and FLNC. Cross-link to form 2 major subcomplexes: one consisting of SGCB, SGCD and SGCG and the other consisting of SGCB and SGCD. The association between SGCB and SGCG is particularly strong while SGCA is loosely associated with the other sarcoglycans. In terms of tissue distribution, most strongly expressed in skeletal and heart muscle. Also detected in proliferating myoblasts.

The protein resides in the cell membrane. The protein localises to the sarcolemma. It localises to the cytoplasm. Its subcellular location is the cytoskeleton. Component of the sarcoglycan complex, a subcomplex of the dystrophin-glycoprotein complex which forms a link between the F-actin cytoskeleton and the extracellular matrix. The polypeptide is Gamma-sarcoglycan (Sgcg) (Mus musculus (Mouse)).